A 390-amino-acid polypeptide reads, in one-letter code: Dynein regulatory complex subunit 5 (390 aa).

LRR repeat units follow at residues 182 to 205, 210 to 233, and 238 to 261; these read TETL…MLAS, NLSI…ALAK, and HSVI…SLAR.

It belongs to the DRC5 family. As to quaternary structure, component of the nexin-dynein regulatory complex (N-DRC). Interacts with DRC1, DRC2, DRC3, DRC4, DRC7 and DRC11.

It localises to the cell projection. It is found in the cilium. Its subcellular location is the flagellum. The protein resides in the cytoplasm. The protein localises to the cytoskeleton. It localises to the flagellum axoneme. Its function is as follows. Component of the nexin-dynein regulatory complex (N-DRC) a key regulator of ciliary/flagellar motility which maintains the alignment and integrity of the distal axoneme and regulates microtubule sliding in motile axonemes. May play a role in the assembly of N-DRC. This Chlamydomonas reinhardtii (Chlamydomonas smithii) protein is Dynein regulatory complex subunit 5.